Here is a 705-residue protein sequence, read N- to C-terminus: p-hydroxybenzoic acid--AMP ligase FadD22 (705 aa).

The Carrier domain maps to 541–619; the sequence is ERQRLVVDAV…GLAQYLEAEL (79 aa). Residue Ser579 is modified to O-(pantetheine 4'-phosphoryl)serine.

The protein belongs to the ATP-dependent AMP-binding enzyme family.

The catalysed reaction is holo-[4-hydroxyphenylalkanoate synthase] + 4-hydroxybenzoate + ATP = 4-hydroxyphenyl-[4-hydroxyphenylalkanoate synthase] + AMP + diphosphate. The protein operates within lipid metabolism; fatty acid biosynthesis. Its function is as follows. Catalyzes the adenylation of p-hydroxybenzoic acid (pHBA) to form p-hydroxybenzoic acid-AMP (pHBA-AMP), which is converted directly to p-hydroxybenzoyl-S-FadD22 (pHBA-S-FAdD22) thioester intermediate in a CoA-independent manner by attack of the phosphopantetheine thiol of FadD22. Usually, this intermediate primes the biosynthesis of the phenolphthiocerol (PPOL) by presenting the pHBA starter unit for elongation by Pks15/1, but M.tuberculosis lacks Pks15/1 due to a natural frameshift and thus is unable to produce PPOL. The chain is p-hydroxybenzoic acid--AMP ligase FadD22 (fadD22) from Mycobacterium tuberculosis (strain CDC 1551 / Oshkosh).